Consider the following 194-residue polypeptide: Protein GrpE (194 aa).

Positions 1 to 39 (MTNHEQDQQDNSELLDDDQVTLESQQAADSGAEAPASDD) are disordered. Over residues 8–20 (QQDNSELLDDDQV) the composition is skewed to acidic residues.

The protein belongs to the GrpE family. In terms of assembly, homodimer.

It is found in the cytoplasm. Participates actively in the response to hyperosmotic and heat shock by preventing the aggregation of stress-denatured proteins, in association with DnaK and GrpE. It is the nucleotide exchange factor for DnaK and may function as a thermosensor. Unfolded proteins bind initially to DnaJ; upon interaction with the DnaJ-bound protein, DnaK hydrolyzes its bound ATP, resulting in the formation of a stable complex. GrpE releases ADP from DnaK; ATP binding to DnaK triggers the release of the substrate protein, thus completing the reaction cycle. Several rounds of ATP-dependent interactions between DnaJ, DnaK and GrpE are required for fully efficient folding. The chain is Protein GrpE from Saccharophagus degradans (strain 2-40 / ATCC 43961 / DSM 17024).